The following is a 473-amino-acid chain: Photosystem II CP43 reaction center protein (473 aa).

Residues M1 to E14 constitute a propeptide that is removed on maturation. At T15 the chain carries N-acetylthreonine. T15 is subject to Phosphothreonine. Helical transmembrane passes span L69 to A93, L134 to N155, K178 to T200, K255 to S275, and W291 to A312. E367 is a binding site for [CaMn4O5] cluster. Residues R447 to P471 form a helical membrane-spanning segment.

It belongs to the PsbB/PsbC family. PsbC subfamily. As to quaternary structure, PSII is composed of 1 copy each of membrane proteins PsbA, PsbB, PsbC, PsbD, PsbE, PsbF, PsbH, PsbI, PsbJ, PsbK, PsbL, PsbM, PsbT, PsbX, PsbY, PsbZ, Psb30/Ycf12, at least 3 peripheral proteins of the oxygen-evolving complex and a large number of cofactors. It forms dimeric complexes. It depends on Binds multiple chlorophylls and provides some of the ligands for the Ca-4Mn-5O cluster of the oxygen-evolving complex. It may also provide a ligand for a Cl- that is required for oxygen evolution. PSII binds additional chlorophylls, carotenoids and specific lipids. as a cofactor.

The protein resides in the plastid. The protein localises to the chloroplast thylakoid membrane. Its function is as follows. One of the components of the core complex of photosystem II (PSII). It binds chlorophyll and helps catalyze the primary light-induced photochemical processes of PSII. PSII is a light-driven water:plastoquinone oxidoreductase, using light energy to abstract electrons from H(2)O, generating O(2) and a proton gradient subsequently used for ATP formation. The polypeptide is Photosystem II CP43 reaction center protein (Staurastrum punctulatum (Green alga)).